We begin with the raw amino-acid sequence, 185 residues long: Translation initiation factor IF-3 (185 aa).

This sequence belongs to the IF-3 family. In terms of assembly, monomer.

It is found in the cytoplasm. Functionally, IF-3 binds to the 30S ribosomal subunit and shifts the equilibrium between 70S ribosomes and their 50S and 30S subunits in favor of the free subunits, thus enhancing the availability of 30S subunits on which protein synthesis initiation begins. The chain is Translation initiation factor IF-3 from Rickettsia felis (strain ATCC VR-1525 / URRWXCal2) (Rickettsia azadi).